The chain runs to 247 residues: UPF0659 protein C216.03 (247 aa).

The protein belongs to the UPF0659 family.

The protein resides in the cytoplasm. It is found in the nucleus. The protein is UPF0659 protein C216.03 of Schizosaccharomyces pombe (strain 972 / ATCC 24843) (Fission yeast).